A 697-amino-acid chain; its full sequence is DNA ligase (697 aa).

Residues 36 to 40 (DAEYD), 85 to 86 (SL), and glutamate 123 each bind NAD(+). The active-site N6-AMP-lysine intermediate is lysine 125. Residues arginine 146, glutamate 182, lysine 320, and lysine 344 each coordinate NAD(+). Residues cysteine 438, cysteine 441, cysteine 456, and cysteine 462 each coordinate Zn(2+). The BRCT domain occupies 619–697 (PQGNTLAGKT…EDGLKALLGV (79 aa)).

The protein belongs to the NAD-dependent DNA ligase family. LigA subfamily. The cofactor is Mg(2+). Mn(2+) is required as a cofactor.

The catalysed reaction is NAD(+) + (deoxyribonucleotide)n-3'-hydroxyl + 5'-phospho-(deoxyribonucleotide)m = (deoxyribonucleotide)n+m + AMP + beta-nicotinamide D-nucleotide.. Functionally, DNA ligase that catalyzes the formation of phosphodiester linkages between 5'-phosphoryl and 3'-hydroxyl groups in double-stranded DNA using NAD as a coenzyme and as the energy source for the reaction. It is essential for DNA replication and repair of damaged DNA. The polypeptide is DNA ligase (Bordetella petrii (strain ATCC BAA-461 / DSM 12804 / CCUG 43448)).